The chain runs to 216 residues: Protein Syd (216 aa).

This sequence belongs to the Syd family.

It is found in the cell inner membrane. Interacts with the SecY protein in vivo. May bind preferentially to an uncomplexed state of SecY, thus functioning either as a chelating agent for excess SecY in the cell or as a regulatory factor that negatively controls the translocase function. The polypeptide is Protein Syd (Shewanella sp. (strain MR-7)).